The following is a 316-amino-acid chain: Mycothiol acetyltransferase (316 aa).

N-acetyltransferase domains are found at residues 16–153 (REVR…VPAV) and 156–316 (VRIR…PAAN). Glutamate 36 is a 1D-myo-inositol 2-(L-cysteinylamino)-2-deoxy-alpha-D-glucopyranoside binding site. Acetyl-CoA contacts are provided by residues 83-85 (LVV) and 91-96 (RRGIGS). 1D-myo-inositol 2-(L-cysteinylamino)-2-deoxy-alpha-D-glucopyranoside contacts are provided by glutamate 183, lysine 228, and glutamate 238. Acetyl-CoA-binding positions include 242 to 244 (VGV) and 249 to 255 (QGRGLGQ). Tyrosine 283 provides a ligand contact to 1D-myo-inositol 2-(L-cysteinylamino)-2-deoxy-alpha-D-glucopyranoside. 288-293 (NVAAVR) is an acetyl-CoA binding site.

This sequence belongs to the acetyltransferase family. MshD subfamily. As to quaternary structure, monomer.

The catalysed reaction is 1D-myo-inositol 2-(L-cysteinylamino)-2-deoxy-alpha-D-glucopyranoside + acetyl-CoA = mycothiol + CoA + H(+). Its function is as follows. Catalyzes the transfer of acetyl from acetyl-CoA to desacetylmycothiol (Cys-GlcN-Ins) to form mycothiol. In Mycobacterium avium (strain 104), this protein is Mycothiol acetyltransferase.